The primary structure comprises 441 residues: GPI mannosyltransferase 2 (441 aa).

10 consecutive transmembrane segments (helical) span residues M4–V24, I35–G55, L115–G135, L143–P163, G165–L185, L199–F223, V249–F269, Y306–L326, L361–I381, and V418–L438.

The protein belongs to the PIGV family.

The protein localises to the endoplasmic reticulum membrane. The protein operates within glycolipid biosynthesis; glycosylphosphatidylinositol-anchor biosynthesis. Functionally, mannosyltransferase involved in glycosylphosphatidylinositol-anchor biosynthesis. Transfers the second mannose to the glycosylphosphatidylinositol during GPI precursor assembly. The sequence is that of GPI mannosyltransferase 2 (gpi18) from Aspergillus fumigatus (strain ATCC MYA-4609 / CBS 101355 / FGSC A1100 / Af293) (Neosartorya fumigata).